The sequence spans 229 residues: Small ribosomal subunit protein uS3 (229 aa).

A KH type-2 domain is found at 39–109; that stretch reads MRKYIKEQLM…QVNIDIVEIR (71 aa). The disordered stretch occupies residues 210-229; the sequence is VVSQQNSRPSGPRGPRRPRA.

This sequence belongs to the universal ribosomal protein uS3 family. In terms of assembly, part of the 30S ribosomal subunit. Forms a tight complex with proteins S10 and S14.

Its function is as follows. Binds the lower part of the 30S subunit head. Binds mRNA in the 70S ribosome, positioning it for translation. In Akkermansia muciniphila (strain ATCC BAA-835 / DSM 22959 / JCM 33894 / BCRC 81048 / CCUG 64013 / CIP 107961 / Muc), this protein is Small ribosomal subunit protein uS3.